The following is a 427-amino-acid chain: 3-phosphoshikimate 1-carboxyvinyltransferase (427 aa).

3 residues coordinate 3-phosphoshikimate: Lys-22, Ser-23, and Arg-27. A phosphoenolpyruvate-binding site is contributed by Lys-22. Phosphoenolpyruvate-binding residues include Gly-96 and Arg-124. 7 residues coordinate 3-phosphoshikimate: Ser-169, Ser-170, Gln-171, Ser-197, Asp-313, Asn-336, and Lys-340. Gln-171 contributes to the phosphoenolpyruvate binding site. The Proton acceptor role is filled by Asp-313. Phosphoenolpyruvate contacts are provided by Arg-344, Arg-386, and Lys-411.

Belongs to the EPSP synthase family. In terms of assembly, monomer.

The protein resides in the cytoplasm. The catalysed reaction is 3-phosphoshikimate + phosphoenolpyruvate = 5-O-(1-carboxyvinyl)-3-phosphoshikimate + phosphate. It functions in the pathway metabolic intermediate biosynthesis; chorismate biosynthesis; chorismate from D-erythrose 4-phosphate and phosphoenolpyruvate: step 6/7. Catalyzes the transfer of the enolpyruvyl moiety of phosphoenolpyruvate (PEP) to the 5-hydroxyl of shikimate-3-phosphate (S3P) to produce enolpyruvyl shikimate-3-phosphate and inorganic phosphate. This is 3-phosphoshikimate 1-carboxyvinyltransferase from Escherichia coli O17:K52:H18 (strain UMN026 / ExPEC).